The primary structure comprises 440 residues: Ribosomal protein uS12 methylthiotransferase RimO (440 aa).

The MTTase N-terminal domain maps to 6–116 (PKVGFVSLGC…VVTAVHEVVP (111 aa)). [4Fe-4S] cluster contacts are provided by C15, C51, C80, C149, C153, and C156. Positions 135–373 (LTPRHYAYLK…MAHQQAISAA (239 aa)) constitute a Radical SAM core domain. The 65-residue stretch at 376–440 (QLKVGKEIEV…DEYDLWAELV (65 aa)) folds into the TRAM domain.

This sequence belongs to the methylthiotransferase family. RimO subfamily. Requires [4Fe-4S] cluster as cofactor.

The protein localises to the cytoplasm. The enzyme catalyses L-aspartate(89)-[ribosomal protein uS12]-hydrogen + (sulfur carrier)-SH + AH2 + 2 S-adenosyl-L-methionine = 3-methylsulfanyl-L-aspartate(89)-[ribosomal protein uS12]-hydrogen + (sulfur carrier)-H + 5'-deoxyadenosine + L-methionine + A + S-adenosyl-L-homocysteine + 2 H(+). Functionally, catalyzes the methylthiolation of an aspartic acid residue of ribosomal protein uS12. The protein is Ribosomal protein uS12 methylthiotransferase RimO of Pseudomonas aeruginosa (strain UCBPP-PA14).